Consider the following 142-residue polypeptide: MMLKTVIYTGVLFLICNKVLVRADPLYSPYSSKDLANLKTLLERFEDTLGQDEGNDNQQDYDIANPEAEGPQAGSPWDRERERQWPASDYKKPQEGYQSQSSRLRDLLMAPRNNRGSSGCFGSRIDRIGSMSSMGCGGSRKG.

Positions 1 to 23 (MMLKTVIYTGVLFLICNKVLVRA) are cleaved as a signal peptide. Residues 24-112 (DPLYSPYSSK…RLRDLLMAPR (89 aa)) constitute a propeptide that is removed on maturation. A disordered region spans residues 47–123 (DTLGQDEGND…NRGSSGCFGS (77 aa)). Over residues 77–94 (WDRERERQWPASDYKKPQ) the composition is skewed to basic and acidic residues. Cys120 and Cys136 form a disulfide bridge.

The protein belongs to the natriuretic peptide family. Cleaved upon secretion to produce the functional hormone. As to expression, expressed in heart atrium and to a lower extent in heart ventricle, but not in brain.

The protein localises to the secreted. Functionally, hormone playing a key role in cardiovascular homeostasis through regulation of natriuresis, diuresis, and vasodilation. Has a cGMP-stimulating activity. The polypeptide is Natriuretic peptides A (nppa) (Acipenser transmontanus (White sturgeon)).